The primary structure comprises 147 residues: Leghemoglobin 8 (147 aa).

The Globin domain maps to 2–147; that stretch reads GFTEKQESLV…LAASIKKSMS (146 aa). Nitrated tyrosine occurs at positions 25 and 30. A heme b-binding site is contributed by serine 45. Serine 45 bears the Phosphoserine mark. Residue histidine 62 participates in O2 binding. Lysine 65, histidine 94, and lysine 97 together coordinate heme b. Tyrosine 135 carries the nitrated tyrosine modification.

It belongs to the plant globin family. As to quaternary structure, monomer. Interacts with CAS31 in the cytoplasm; this interaction leads to its protection from denaturation under thermal and drought stresses. Post-translationally, nitrated in effective nodules and particularly in hypoxic conditions; this mechanism may play a protective role in the symbiosis by buffering toxic peroxynitrite NO(2)(-). Nitration level decrease during nodule senescence. In terms of processing, phosphorylation at Ser-45 disrupts the molecular environment of its porphyrin ring oxygen binding pocket, thus leading to a reduced oxygen consumption and to the delivery of oxygen O(2) to symbiosomes. In terms of tissue distribution, root nodules.

The protein resides in the cytoplasm. The protein localises to the nucleus. Leghemoglobin that reversibly binds oxygen O(2) through a pentacoordinated heme iron. In root nodules, facilitates the diffusion of oxygen to the bacteroids while preventing the bacterial nitrogenase from being inactivated by buffering dioxygen, nitric oxide and carbon monoxide, and promoting the formation of reactive oxygen species (ROS, e.g. H(2)O(2)). This role is essential for symbiotic nitrogen fixation (SNF). The chain is Leghemoglobin 8 from Medicago truncatula (Barrel medic).